The following is a 734-amino-acid chain: Ribosomal RNA large subunit methyltransferase K/L (734 aa).

A THUMP domain is found at 49–167; the sequence is HAYRICMWSR…KTEHTYCLDL (119 aa).

Belongs to the methyltransferase superfamily. RlmKL family.

The protein resides in the cytoplasm. The catalysed reaction is guanosine(2445) in 23S rRNA + S-adenosyl-L-methionine = N(2)-methylguanosine(2445) in 23S rRNA + S-adenosyl-L-homocysteine + H(+). The enzyme catalyses guanosine(2069) in 23S rRNA + S-adenosyl-L-methionine = N(2)-methylguanosine(2069) in 23S rRNA + S-adenosyl-L-homocysteine + H(+). Functionally, specifically methylates the guanine in position 2445 (m2G2445) and the guanine in position 2069 (m7G2069) of 23S rRNA. This chain is Ribosomal RNA large subunit methyltransferase K/L, found in Acinetobacter baumannii (strain ACICU).